The primary structure comprises 126 residues: Phosphoribosyl-AMP cyclohydrolase (126 aa).

Asp82 contributes to the Mg(2+) binding site. Cys83 contributes to the Zn(2+) binding site. 2 residues coordinate Mg(2+): Asp84 and Asp86. Cys99 and Cys106 together coordinate Zn(2+).

It belongs to the PRA-CH family. Homodimer. Requires Mg(2+) as cofactor. Zn(2+) is required as a cofactor.

Its subcellular location is the cytoplasm. The enzyme catalyses 1-(5-phospho-beta-D-ribosyl)-5'-AMP + H2O = 1-(5-phospho-beta-D-ribosyl)-5-[(5-phospho-beta-D-ribosylamino)methylideneamino]imidazole-4-carboxamide. It participates in amino-acid biosynthesis; L-histidine biosynthesis; L-histidine from 5-phospho-alpha-D-ribose 1-diphosphate: step 3/9. Functionally, catalyzes the hydrolysis of the adenine ring of phosphoribosyl-AMP. This Micrococcus luteus (strain ATCC 4698 / DSM 20030 / JCM 1464 / CCM 169 / CCUG 5858 / IAM 1056 / NBRC 3333 / NCIMB 9278 / NCTC 2665 / VKM Ac-2230) (Micrococcus lysodeikticus) protein is Phosphoribosyl-AMP cyclohydrolase.